Here is a 237-residue protein sequence, read N- to C-terminus: Sugar fermentation stimulation protein homolog (237 aa).

The protein belongs to the SfsA family.

This Pseudomonas fluorescens (strain ATCC BAA-477 / NRRL B-23932 / Pf-5) protein is Sugar fermentation stimulation protein homolog.